The primary structure comprises 529 residues: Lanosterol 14-alpha demethylase (529 aa).

Residue Cys468 coordinates heme.

The protein belongs to the cytochrome P450 family. Requires heme as cofactor.

It localises to the membrane. The catalysed reaction is a 14alpha-methyl steroid + 3 reduced [NADPH--hemoprotein reductase] + 3 O2 = a Delta(14) steroid + formate + 3 oxidized [NADPH--hemoprotein reductase] + 4 H2O + 4 H(+). It catalyses the reaction a 14alpha-methyl steroid + reduced [NADPH--hemoprotein reductase] + O2 = a 14alpha-hydroxymethyl steroid + oxidized [NADPH--hemoprotein reductase] + H2O + H(+). It carries out the reaction a 14alpha-hydroxymethyl steroid + reduced [NADPH--hemoprotein reductase] + O2 = a 14alpha-formyl steroid + oxidized [NADPH--hemoprotein reductase] + 2 H2O + H(+). The enzyme catalyses a 14alpha-formyl steroid + reduced [NADPH--hemoprotein reductase] + O2 = a Delta(14) steroid + formate + oxidized [NADPH--hemoprotein reductase] + H2O + 2 H(+). The catalysed reaction is lanosterol + 3 reduced [NADPH--hemoprotein reductase] + 3 O2 = 4,4-dimethyl-5alpha-cholesta-8,14,24-trien-3beta-ol + formate + 3 oxidized [NADPH--hemoprotein reductase] + 4 H2O + 4 H(+). It catalyses the reaction lanosterol + reduced [NADPH--hemoprotein reductase] + O2 = 32-hydroxylanosterol + oxidized [NADPH--hemoprotein reductase] + H2O + H(+). It carries out the reaction 32-hydroxylanosterol + reduced [NADPH--hemoprotein reductase] + O2 = 32-oxolanosterol + oxidized [NADPH--hemoprotein reductase] + 2 H2O + H(+). The enzyme catalyses 32-oxolanosterol + reduced [NADPH--hemoprotein reductase] + O2 = 4,4-dimethyl-5alpha-cholesta-8,14,24-trien-3beta-ol + formate + oxidized [NADPH--hemoprotein reductase] + H2O + 2 H(+). The catalysed reaction is eburicol + 3 reduced [NADPH--hemoprotein reductase] + 3 O2 = 14-demethyleburicol + formate + 3 oxidized [NADPH--hemoprotein reductase] + 4 H2O + 4 H(+). It catalyses the reaction eburicol + reduced [NADPH--hemoprotein reductase] + O2 = 32-hydroxyeburicol + oxidized [NADPH--hemoprotein reductase] + H2O + H(+). It carries out the reaction 32-hydroxyeburicol + reduced [NADPH--hemoprotein reductase] + O2 = 32-oxoeburicol + oxidized [NADPH--hemoprotein reductase] + 2 H2O + H(+). The enzyme catalyses 32-oxoeburicol + reduced [NADPH--hemoprotein reductase] + O2 = 14-demethyleburicol + formate + oxidized [NADPH--hemoprotein reductase] + H2O + 2 H(+). It functions in the pathway steroid biosynthesis; zymosterol biosynthesis; zymosterol from lanosterol: step 1/6. In terms of biological role, sterol 14alpha-demethylase that plays a critical role in the third module of ergosterol biosynthesis pathway, being ergosterol the major sterol component in fungal membranes that participates in a variety of functions. The third module or late pathway involves the ergosterol synthesis itself through consecutive reactions that mainly occur in the endoplasmic reticulum (ER) membrane. In filamentous fungi, during the initial step of this module, lanosterol (lanosta-8,24-dien-3beta-ol) can be metabolized to eburicol. Sterol 14alpha-demethylase catalyzes the three-step oxidative removal of the 14alpha-methyl group (C-32) of both these sterols in the form of formate, and converts eburicol and lanosterol to 14-demethyleburicol (4,4,24-trimethylergosta-8,14,24(28)-trienol) and 4,4-dimethyl-5alpha-cholesta-8,14,24-trien-3beta-ol, respectively, which are further metabolized by other enzymes in the pathway to ergosterol. Can also use substrates not intrinsic to fungi, such as 24,25-dihydrolanosterol (DHL), producing 4,4-dimethyl-8,14-cholestadien-3-beta-ol, but at lower rates than the endogenous substrates. This chain is Lanosterol 14-alpha demethylase (ERG11), found in Eremothecium gossypii (strain ATCC 10895 / CBS 109.51 / FGSC 9923 / NRRL Y-1056) (Yeast).